The following is a 246-amino-acid chain: tRNA pseudouridine synthase B (246 aa).

Aspartate 44 functions as the Nucleophile in the catalytic mechanism.

Belongs to the pseudouridine synthase TruB family. Type 1 subfamily.

The catalysed reaction is uridine(55) in tRNA = pseudouridine(55) in tRNA. Its function is as follows. Responsible for synthesis of pseudouridine from uracil-55 in the psi GC loop of transfer RNAs. In Desulfotalea psychrophila (strain LSv54 / DSM 12343), this protein is tRNA pseudouridine synthase B.